Reading from the N-terminus, the 343-residue chain is Phenylalanine--tRNA ligase alpha subunit (343 aa).

E264 serves as a coordination point for Mg(2+).

The protein belongs to the class-II aminoacyl-tRNA synthetase family. Phe-tRNA synthetase alpha subunit type 1 subfamily. Tetramer of two alpha and two beta subunits. Requires Mg(2+) as cofactor.

It localises to the cytoplasm. It catalyses the reaction tRNA(Phe) + L-phenylalanine + ATP = L-phenylalanyl-tRNA(Phe) + AMP + diphosphate + H(+). The sequence is that of Phenylalanine--tRNA ligase alpha subunit from Azoarcus sp. (strain BH72).